Here is a 667-residue protein sequence, read N- to C-terminus: DNA ligase (667 aa).

Residues 30–34 (DSEYD), 79–80 (SL), and Glu-112 each bind NAD(+). The active-site N6-AMP-lysine intermediate is Lys-114. Positions 135, 172, 289, and 313 each coordinate NAD(+). Zn(2+)-binding residues include Cys-407, Cys-410, Cys-425, and Cys-431. The region spanning 590 to 667 (VRDNPLKGKT…SENEFLALLA (78 aa)) is the BRCT domain.

Belongs to the NAD-dependent DNA ligase family. LigA subfamily. Requires Mg(2+) as cofactor. It depends on Mn(2+) as a cofactor.

The enzyme catalyses NAD(+) + (deoxyribonucleotide)n-3'-hydroxyl + 5'-phospho-(deoxyribonucleotide)m = (deoxyribonucleotide)n+m + AMP + beta-nicotinamide D-nucleotide.. Its function is as follows. DNA ligase that catalyzes the formation of phosphodiester linkages between 5'-phosphoryl and 3'-hydroxyl groups in double-stranded DNA using NAD as a coenzyme and as the energy source for the reaction. It is essential for DNA replication and repair of damaged DNA. This Histophilus somni (strain 2336) (Haemophilus somnus) protein is DNA ligase.